Consider the following 506-residue polypeptide: ATP synthase subunit alpha, mitochondrial (506 aa).

171–178 (GDRQTGKT) lines the ATP pocket.

This sequence belongs to the ATPase alpha/beta chains family. As to quaternary structure, F-type ATPases have 2 components, CF(1) - the catalytic core - and CF(0) - the membrane proton channel. CF(1) has five subunits: alpha(3), beta(3), gamma(1), delta(1), epsilon(1). CF(0) has three main subunits: a, b and c.

It is found in the mitochondrion. It localises to the mitochondrion inner membrane. In terms of biological role, mitochondrial membrane ATP synthase (F(1)F(0) ATP synthase or Complex V) produces ATP from ADP in the presence of a proton gradient across the membrane which is generated by electron transport complexes of the respiratory chain. F-type ATPases consist of two structural domains, F(1) - containing the extramembraneous catalytic core, and F(0) - containing the membrane proton channel, linked together by a central stalk and a peripheral stalk. During catalysis, ATP synthesis in the catalytic domain of F(1) is coupled via a rotary mechanism of the central stalk subunits to proton translocation. Subunits alpha and beta form the catalytic core in F(1). Rotation of the central stalk against the surrounding alpha(3)beta(3) subunits leads to hydrolysis of ATP in three separate catalytic sites on the beta subunits. Subunit alpha does not bear the catalytic high-affinity ATP-binding sites. This chain is ATP synthase subunit alpha, mitochondrial (ATPA), found in Beta vulgaris (Sugar beet).